Here is a 338-residue protein sequence, read N- to C-terminus: Ferredoxin--NADP reductase (338 aa).

Aspartate 36, glutamine 44, tyrosine 49, valine 89, phenylalanine 123, aspartate 290, and threonine 331 together coordinate FAD.

The protein belongs to the ferredoxin--NADP reductase type 2 family. In terms of assembly, homodimer. FAD is required as a cofactor.

It carries out the reaction 2 reduced [2Fe-2S]-[ferredoxin] + NADP(+) + H(+) = 2 oxidized [2Fe-2S]-[ferredoxin] + NADPH. This is Ferredoxin--NADP reductase from Anaplasma phagocytophilum (strain HZ).